A 144-amino-acid chain; its full sequence is uncharacterized protein (144 aa).

Positions 1–24 are disordered; the sequence is MGKVIQFPFGEEPEKKEEKELKTE. The span at 12–24 shows a compositional bias: basic and acidic residues; sequence EPEKKEEKELKTE.

This is an uncharacterized protein from Aquifex aeolicus (strain VF5).